The following is a 144-amino-acid chain: Maximins 11/H11 (144 aa).

A signal peptide spans 1 to 18; that stretch reads MNFKYIVAVSFLIASAYA. The propeptide occupies 19 to 43; the sequence is RSEENDEQSLSQRDVLEEESLREIR. Asn-70 bears the Asparagine amide mark. Residues 74-123 constitute a propeptide that is removed on maturation; the sequence is TAEDHEVMKRLEAVMRDLDSLDYPEEASERETRGFNQEEIANLFTKKEKR. Isoleucine amide is present on Ile-143.

This sequence belongs to the bombinin family. Expressed by the skin glands.

Its subcellular location is the secreted. Functionally, maximin-11 shows antimicrobial activity against bacteria and against the fungus C.albicans. It has little hemolytic activity. Its function is as follows. Maximin-H11 shows antimicrobial activity against bacteria and against the fungus C.albicans. Shows strong hemolytic activity. In Bombina maxima (Giant fire-bellied toad), this protein is Maximins 11/H11.